The following is a 412-amino-acid chain: uncharacterized protein (412 aa).

This sequence belongs to the PQQ oxidoreductase GdhB family. Pyrroloquinoline quinone is required as a cofactor.

This is an uncharacterized protein from Synechocystis sp. (strain ATCC 27184 / PCC 6803 / Kazusa).